Consider the following 259-residue polypeptide: Flap endonuclease Xni (259 aa).

Asp109 provides a ligand contact to Mg(2+). Residues 165-255 (LKPEQLADYW…FNLQDIRYEK (91 aa)) form the 5'-3' exonuclease domain. 4 residues coordinate K(+): Leu176, Ala177, Ile187, and Val190. The interaction with DNA stretch occupies residues 189–194 (GVGPKA).

It belongs to the Xni family. It depends on Mg(2+) as a cofactor. K(+) serves as cofactor.

Its function is as follows. Has flap endonuclease activity. During DNA replication, flap endonucleases cleave the 5'-overhanging flap structure that is generated by displacement synthesis when DNA polymerase encounters the 5'-end of a downstream Okazaki fragment. This chain is Flap endonuclease Xni, found in Aliivibrio fischeri (strain ATCC 700601 / ES114) (Vibrio fischeri).